A 1047-amino-acid chain; its full sequence is Ribonucleoside-diphosphate reductase subunit alpha (1047 aa).

ATP-cone domains follow at residues 9–111, 118–219, and 237–327; these read CTIV…KAHR, LSVV…ARVR, and VEVL…EALG. Residues T442, 457–458, G486, 670–674, and 857–861 contribute to the substrate site; these read SC, NLCTE, and PTATI. C458 and C687 are oxidised to a cystine. The active-site Proton acceptor is N670. The active-site Cysteine radical intermediate is the C672. E674 (proton acceptor) is an active-site residue.

This sequence belongs to the ribonucleoside diphosphate reductase large chain family. In terms of assembly, tetramer of two alpha and two beta subunits.

It carries out the reaction a 2'-deoxyribonucleoside 5'-diphosphate + [thioredoxin]-disulfide + H2O = a ribonucleoside 5'-diphosphate + [thioredoxin]-dithiol. With respect to regulation, under complex allosteric control mediated by deoxynucleoside triphosphates and ATP binding. The type of nucleotide bound at the specificity site determines substrate preference. It seems probable that ATP makes the enzyme reduce CDP and UDP, dGTP favors ADP reduction and dTTP favors GDP reduction. Provides the precursors necessary for DNA synthesis. Catalyzes the biosynthesis of deoxyribonucleotides from the corresponding ribonucleotides. This Chlamydia trachomatis serovar D (strain ATCC VR-885 / DSM 19411 / UW-3/Cx) protein is Ribonucleoside-diphosphate reductase subunit alpha (nrdA).